Reading from the N-terminus, the 126-residue chain is Large ribosomal subunit protein bL12 (126 aa).

The segment covering 36-55 (APAPAAAPAAGGDQGGAEAA) has biased composition (low complexity). Residues 36 to 57 (APAPAAAPAAGGDQGGAEAAEQ) form a disordered region.

Belongs to the bacterial ribosomal protein bL12 family. In terms of assembly, homodimer. Part of the ribosomal stalk of the 50S ribosomal subunit. Forms a multimeric L10(L12)X complex, where L10 forms an elongated spine to which 2 to 4 L12 dimers bind in a sequential fashion. Binds GTP-bound translation factors.

In terms of biological role, forms part of the ribosomal stalk which helps the ribosome interact with GTP-bound translation factors. Is thus essential for accurate translation. This Natranaerobius thermophilus (strain ATCC BAA-1301 / DSM 18059 / JW/NM-WN-LF) protein is Large ribosomal subunit protein bL12.